The sequence spans 220 residues: Ribosomal RNA large subunit methyltransferase E (220 aa).

5 residues coordinate S-adenosyl-L-methionine: Gly60, Trp62, Asp92, Asp108, and Asp133. Lys173 functions as the Proton acceptor in the catalytic mechanism.

It belongs to the class I-like SAM-binding methyltransferase superfamily. RNA methyltransferase RlmE family.

It is found in the cytoplasm. The catalysed reaction is uridine(2552) in 23S rRNA + S-adenosyl-L-methionine = 2'-O-methyluridine(2552) in 23S rRNA + S-adenosyl-L-homocysteine + H(+). In terms of biological role, specifically methylates the uridine in position 2552 of 23S rRNA at the 2'-O position of the ribose in the fully assembled 50S ribosomal subunit. The sequence is that of Ribosomal RNA large subunit methyltransferase E from Burkholderia multivorans (strain ATCC 17616 / 249).